The following is a 407-amino-acid chain: Snake venom metalloproteinase ACLH (407 aa).

The signal sequence occupies residues 1-20 (MIQVLLVTLCLAAFPYQGSS). Residues 21-187 (IILESGNVND…PIKKASQLNL (167 aa)) constitute a propeptide that is removed on maturation. One can recognise a Peptidase M12B domain in the interval 193–389 (RYVELVTVVD…ENPQCILNKP (197 aa)). Ca(2+) contacts are provided by Glu-196 and Asp-280. 3 disulfides stabilise this stretch: Cys-304–Cys-384, Cys-344–Cys-368, and Cys-346–Cys-351. His-329 provides a ligand contact to Zn(2+). Residue Glu-330 is part of the active site. Zn(2+)-binding residues include His-333 and His-339. Asn-367 is a glycosylation site (N-linked (GlcNAc...) asparagine). Positions 384 and 387 each coordinate Ca(2+).

The protein belongs to the venom metalloproteinase (M12B) family. P-I subfamily. In terms of assembly, monomer. Zn(2+) serves as cofactor. Post-translationally, contains sialic acid terminally alpha(2-6)-linked to galactose in a complex N-glycan chain. Expressed by the venom gland.

Its subcellular location is the secreted. Its function is as follows. This zinc hemorrhagic metalloproteinase has fibrino(geno)lytic activities. It causes hemorrhage and has myonecrotic activity on both fiber types I and II. The recombinant enzyme, without post-translational modifications, also has proteolytic activity, but does not show any hemorrhagic activity. This is Snake venom metalloproteinase ACLH from Agkistrodon contortrix laticinctus (Broad-banded copperhead).